The sequence spans 916 residues: Isoleucine--tRNA ligase (916 aa).

The 'HIGH' region signature appears at 57-67 (PYANGNLHMGH). Position 554 (glutamate 554) interacts with L-isoleucyl-5'-AMP. The short motif at 595 to 599 (KMSKS) is the 'KMSKS' region element. An ATP-binding site is contributed by lysine 598. Zn(2+) is bound by residues cysteine 885, cysteine 888, cysteine 905, and cysteine 908.

Belongs to the class-I aminoacyl-tRNA synthetase family. IleS type 1 subfamily. In terms of assembly, monomer. It depends on Zn(2+) as a cofactor.

It localises to the cytoplasm. The enzyme catalyses tRNA(Ile) + L-isoleucine + ATP = L-isoleucyl-tRNA(Ile) + AMP + diphosphate. Catalyzes the attachment of isoleucine to tRNA(Ile). As IleRS can inadvertently accommodate and process structurally similar amino acids such as valine, to avoid such errors it has two additional distinct tRNA(Ile)-dependent editing activities. One activity is designated as 'pretransfer' editing and involves the hydrolysis of activated Val-AMP. The other activity is designated 'posttransfer' editing and involves deacylation of mischarged Val-tRNA(Ile). The chain is Isoleucine--tRNA ligase from Staphylococcus epidermidis (strain ATCC 12228 / FDA PCI 1200).